A 391-amino-acid chain; its full sequence is GDSL esterase/lipase 22 (391 aa).

The signal sequence occupies residues 1–29 (MMANNCNLVSVLCVILVLTLFHNPITVAG). Ser43 serves as the catalytic Nucleophile. 3 N-linked (GlcNAc...) asparagine glycosylation sites follow: Asn105, Asn165, and Asn288. Active-site residues include Asp322 and His325. Residues 372 to 391 (PATVHASDSSSSTSRGYEYY) form a disordered region.

It belongs to the 'GDSL' lipolytic enzyme family. As to quaternary structure, component of the PYK10 complex, at least composed of PYK10/BGLU23, BGLU21, BGLU22, JAL22, JAL23, PBP1/JAL30, PBP2/JAL31, JAL32, JAL33, JAL34, JAL35, GLL22 and GLL23.

Its subcellular location is the secreted. The sequence is that of GDSL esterase/lipase 22 (GLL22) from Arabidopsis thaliana (Mouse-ear cress).